The primary structure comprises 760 residues: Xaa-Pro dipeptidyl-peptidase (760 aa).

Active-site charge relay system residues include serine 349, aspartate 469, and histidine 499.

It belongs to the peptidase S15 family. Homodimer.

Its subcellular location is the cytoplasm. It catalyses the reaction Hydrolyzes Xaa-Pro-|- bonds to release unblocked, N-terminal dipeptides from substrates including Ala-Pro-|-p-nitroanilide and (sequentially) Tyr-Pro-|-Phe-Pro-|-Gly-Pro-|-Ile.. Its function is as follows. Removes N-terminal dipeptides sequentially from polypeptides having unsubstituted N-termini provided that the penultimate residue is proline. The protein is Xaa-Pro dipeptidyl-peptidase of Streptococcus pyogenes serotype M6 (strain ATCC BAA-946 / MGAS10394).